Reading from the N-terminus, the 557-residue chain is Potassium-transporting ATPase potassium-binding subunit (557 aa).

10 helical membrane-spanning segments follow: residues 4–24 (LGAG…VHVP), 61–81 (TYAL…YAFL), 131–151 (GLTV…VALV), 174–194 (LRVL…TGVV), 253–273 (LEVF…GTLV), 280–300 (LAVL…TTWA), 375–395 (GLYG…LMVG), 412–432 (CAAL…AVAL), 483–503 (LAIW…AGAF), and 528–548 (LAVV…LGPI).

It belongs to the KdpA family. As to quaternary structure, the system is composed of three essential subunits: KdpA, KdpB and KdpC.

The protein resides in the cell membrane. Its function is as follows. Part of the high-affinity ATP-driven potassium transport (or Kdp) system, which catalyzes the hydrolysis of ATP coupled with the electrogenic transport of potassium into the cytoplasm. This subunit binds the extracellular potassium ions and delivers the ions to the membrane domain of KdpB through an intramembrane tunnel. This is Potassium-transporting ATPase potassium-binding subunit from Kineococcus radiotolerans (strain ATCC BAA-149 / DSM 14245 / SRS30216).